A 2898-amino-acid polypeptide reads, in one-letter code: Pericentrin (2898 aa).

Positions 1 to 117 (MEDEQEQRRR…QPPPPQTAHS (117 aa)) are disordered. Over residues 34-44 (SKKKTAKRKGS) the composition is skewed to basic residues. Ser44 is subject to Phosphoserine. Coiled-coil stretches lie at residues 127-343 (LNNM…IRLL) and 382-434 (AQQQ…DSLE). The segment at 429-460 (REDSLESTEISSSCVLPEETSGREGKEPPDPL) is disordered. Residues 448 to 457 (TSGREGKEPP) are compositionally biased toward basic and acidic residues. Coiled coils occupy residues 468-527 (KVQE…LREK), 611-696 (CALQ…LETH), 727-787 (VADV…SLRM), and 872-939 (SQDQ…LRRL). Residue Ser1022 is modified to Phosphoserine. Coiled-coil stretches lie at residues 1069–1383 (EREF…QENM), 1429–1482 (NEVV…SLMG), and 1529–1593 (QLLA…AKEA). Ser1437 carries the post-translational modification Phosphoserine. Disordered stretches follow at residues 1745 to 1786 (VASR…DDVL), 1815 to 1880 (TQEK…PLTP), and 1958 to 1979 (TSPS…GPDI). Composition is skewed to polar residues over residues 1747–1766 (SRDT…SENG) and 1817–1834 (EKLT…SGHS). Residues 1801 to 1822 (NQDLLVQVEMPDFPTQEKLTSQ) form an interaction with CDK5RAP2 region. Ser1828, Ser1859, Ser1860, and Ser1959 each carry phosphoserine. The segment covering 1963–1976 (ELARRSDGSRKSDG) has biased composition (basic and acidic residues). At Ser1987 the chain carries Phosphoserine. Polar residues predominate over residues 2046–2055 (SESQDPSSAL). The interval 2046 to 2088 (SESQDPSSALNKGEPRDPLDGFPRDSQALSEVTTDKGEKESLE) is disordered. Composition is skewed to basic and acidic residues over residues 2058–2068 (GEPRDPLDGFP) and 2078–2088 (TTDKGEKESLE). Residue Ser2128 is modified to Phosphoserine. Coiled coils occupy residues 2211–2403 (KVEQ…EALQ) and 2429–2590 (HALL…ELSM). Disordered regions lie at residues 2509 to 2532 (VSGG…QFQE) and 2653 to 2684 (NRQS…QTTS). The tract at residues 2545–2810 (LCAAGLLTSF…SQRQRSPSGP (266 aa)) is interaction with NEK2. Positions 2653 to 2671 (NRQSKSSLKQDGTDLQSSL) are enriched in polar residues. Residues 2758–2771 (KFRTAVRVVIAVLR) form a calmodulin-binding region. Residues 2787–2898 (ALVHPKSTRH…QKSCHQKIKQ (112 aa)) are disordered. Basic residues predominate over residues 2792 to 2802 (KSTRHGHRTSQ). Residues 2845-2860 (TSTPSSRLERSLTASQ) show a composition bias toward polar residues. Residues 2861-2874 (DPEHSLTEYIHHLE) show a composition bias toward basic and acidic residues. Ser2865 bears the Phosphoserine mark.

In terms of assembly, interacts with DISC1 and PCM1. Binds calmodulin. Interacts with CEP131. Interacts with CDK5RAP2; the interaction is leading to centrosomal localization of PCNT and CDK5RAP2. Interacts with CHD3. Interacts with CHD4; the interaction regulates centrosome integrity. Interacts with NEK2. Interacts with CCDC13. Interacts with CEP68. Interacts with ATF5; the ATF5:PCNT:polyglutamylated tubulin (PGT) tripartite unites the mother centriole and the pericentriolar material (PCM) in the centrosome. Cleaved during mitotis which leads to removal of CDK5RAP2 from the centrosome and promotes centriole disengagement and subsequent centriole separation. The C-terminal fragment is rapidly degraded following cleavage. In terms of processing, ubiquitinated by TRIM43; leading to proteasomal degradation. As to expression, expressed in heart and lung (at protein level). Expressed in kidney, thymus, liver, brain, muscle, testis, spleen, lung and heart.

It is found in the cytoplasm. The protein resides in the cytoskeleton. It localises to the microtubule organizing center. The protein localises to the centrosome. In terms of biological role, integral component of the filamentous matrix of the centrosome involved in the initial establishment of organized microtubule arrays in both mitosis and meiosis. Plays a role, together with DISC1, in the microtubule network formation. Is an integral component of the pericentriolar material (PCM). May play an important role in preventing premature centrosome splitting during interphase by inhibiting NEK2 kinase activity at the centrosome. In Mus musculus (Mouse), this protein is Pericentrin (Pcnt).